The primary structure comprises 372 residues: Aminomethyltransferase (372 aa).

This sequence belongs to the GcvT family. In terms of assembly, the glycine cleavage system is composed of four proteins: P, T, L and H.

It carries out the reaction N(6)-[(R)-S(8)-aminomethyldihydrolipoyl]-L-lysyl-[protein] + (6S)-5,6,7,8-tetrahydrofolate = N(6)-[(R)-dihydrolipoyl]-L-lysyl-[protein] + (6R)-5,10-methylene-5,6,7,8-tetrahydrofolate + NH4(+). The glycine cleavage system catalyzes the degradation of glycine. The sequence is that of Aminomethyltransferase from Rubrobacter xylanophilus (strain DSM 9941 / JCM 11954 / NBRC 16129 / PRD-1).